Here is a 355-residue protein sequence, read N- to C-terminus: 3-dehydroquinate synthase (355 aa).

NAD(+)-binding positions include 69-74, 103-107, 127-128, Lys-140, Lys-149, and 167-170; these read DGEQHK, GVIGD, TT, and TLQT. Residues Glu-182, His-245, and His-262 each contribute to the Zn(2+) site.

The protein belongs to the sugar phosphate cyclases superfamily. Dehydroquinate synthase family. Co(2+) serves as cofactor. The cofactor is Zn(2+). NAD(+) is required as a cofactor.

Its subcellular location is the cytoplasm. It catalyses the reaction 7-phospho-2-dehydro-3-deoxy-D-arabino-heptonate = 3-dehydroquinate + phosphate. Its pathway is metabolic intermediate biosynthesis; chorismate biosynthesis; chorismate from D-erythrose 4-phosphate and phosphoenolpyruvate: step 2/7. In terms of biological role, catalyzes the conversion of 3-deoxy-D-arabino-heptulosonate 7-phosphate (DAHP) to dehydroquinate (DHQ). The protein is 3-dehydroquinate synthase of Pseudoalteromonas atlantica (strain T6c / ATCC BAA-1087).